Here is a 274-residue protein sequence, read N- to C-terminus: ATP synthase subunit a (274 aa).

A run of 5 helical transmembrane segments spans residues 44-64 (VDSM…FYMV), 110-130 (FIWV…FPFI), 142-164 (IVPS…LILF), 212-232 (LFGN…LLPW), and 243-263 (AIFH…LTIV).

Belongs to the ATPase A chain family. F-type ATPases have 2 components, CF(1) - the catalytic core - and CF(0) - the membrane proton channel. CF(1) has five subunits: alpha(3), beta(3), gamma(1), delta(1), epsilon(1). CF(0) has three main subunits: a(1), b(2) and c(9-12). The alpha and beta chains form an alternating ring which encloses part of the gamma chain. CF(1) is attached to CF(0) by a central stalk formed by the gamma and epsilon chains, while a peripheral stalk is formed by the delta and b chains.

The protein resides in the cell membrane. Functionally, key component of the proton channel; it plays a direct role in the translocation of protons across the membrane. This is ATP synthase subunit a from Buchnera aphidicola subsp. Acyrthosiphon pisum (strain APS) (Acyrthosiphon pisum symbiotic bacterium).